The following is a 79-amino-acid chain: Cell division protein ZapB (79 aa).

The stretch at 4 to 78 (EVFEKLEAKV…LRALLGKMEE (75 aa)) forms a coiled coil.

Belongs to the ZapB family. In terms of assembly, homodimer. The ends of the coiled-coil dimer bind to each other, forming polymers. Interacts with FtsZ.

The protein resides in the cytoplasm. Non-essential, abundant cell division factor that is required for proper Z-ring formation. It is recruited early to the divisome by direct interaction with FtsZ, stimulating Z-ring assembly and thereby promoting cell division earlier in the cell cycle. Its recruitment to the Z-ring requires functional FtsA or ZipA. The sequence is that of Cell division protein ZapB from Pectobacterium carotovorum subsp. carotovorum (strain PC1).